The sequence spans 497 residues: Glycerol kinase (497 aa).

Thr12 contributes to the ADP binding site. 3 residues coordinate ATP: Thr12, Thr13, and Ser14. Thr12 is a sn-glycerol 3-phosphate binding site. Arg16 is an ADP binding site. Arg82, Glu83, Tyr134, and Asp243 together coordinate sn-glycerol 3-phosphate. 5 residues coordinate glycerol: Arg82, Glu83, Tyr134, Asp243, and Gln244. Positions 265 and 308 each coordinate ADP. Residues Thr265, Gly308, Gln312, and Gly409 each coordinate ATP. Residues Gly409 and Asn413 each coordinate ADP.

Belongs to the FGGY kinase family.

It carries out the reaction glycerol + ATP = sn-glycerol 3-phosphate + ADP + H(+). Its pathway is polyol metabolism; glycerol degradation via glycerol kinase pathway; sn-glycerol 3-phosphate from glycerol: step 1/1. Inhibited by fructose 1,6-bisphosphate (FBP). Functionally, key enzyme in the regulation of glycerol uptake and metabolism. Catalyzes the phosphorylation of glycerol to yield sn-glycerol 3-phosphate. This is Glycerol kinase from Nitratidesulfovibrio vulgaris (strain ATCC 29579 / DSM 644 / CCUG 34227 / NCIMB 8303 / VKM B-1760 / Hildenborough) (Desulfovibrio vulgaris).